The chain runs to 585 residues: Protein FAM13C (585 aa).

Disordered regions lie at residues 26–45, 83–138, and 171–216; these read PVSLHEDQTDCSSLRDENNK, SMGN…NAFK, and EAAQ…APED. Composition is skewed to basic and acidic residues over residues 27–45 and 99–112; these read VSLHEDQTDCSSLRDENNK and ESGRSHGESQETEH. Ser-131 carries the phosphoserine modification. Ser-238 is modified (phosphoserine). 3 disordered regions span residues 250-282, 349-391, and 441-477; these read FNLDPESAPSPPSTQQFMMPRSSSRCSCGDGKE, EEQG…EETP, and IPTIQEEEDSDEDRPQGSQQPSLADPASHLPVGDHLT. The span at 262–275 shows a compositional bias: polar residues; that stretch reads STQQFMMPRSSSRC. Ser-385 and Ser-386 each carry phosphoserine.

This sequence belongs to the FAM13 family.

This is Protein FAM13C (FAM13C) from Homo sapiens (Human).